Here is an 86-residue protein sequence, read N- to C-terminus: MASSKAAINLQDIFLNQVRKEHVPVTVYLINGFQLKGTVKGFDNFTVVLESESKQQLLIYKHAISTISPQKPVIFSGSEKDDKKEE.

The Sm domain occupies 12–73 (DIFLNQVRKE…ISTISPQKPV (62 aa)).

Belongs to the Hfq family. In terms of assembly, homohexamer.

Functionally, RNA chaperone that binds small regulatory RNA (sRNAs) and mRNAs to facilitate mRNA translational regulation in response to envelope stress, environmental stress and changes in metabolite concentrations. Also binds with high specificity to tRNAs. This chain is RNA-binding protein Hfq, found in Caldanaerobacter subterraneus subsp. tengcongensis (strain DSM 15242 / JCM 11007 / NBRC 100824 / MB4) (Thermoanaerobacter tengcongensis).